A 388-amino-acid polypeptide reads, in one-letter code: Succinate--CoA ligase [ADP-forming] subunit beta (388 aa).

Residues 9–244 (KALFAEYGLP…PSQDDAREAH (236 aa)) form the ATP-grasp domain. ATP contacts are provided by residues Lys46, 53 to 55 (GRG), Glu99, Thr102, and Glu107. Positions 199 and 213 each coordinate Mg(2+). Residues Asn264 and 321–323 (GIV) contribute to the substrate site.

It belongs to the succinate/malate CoA ligase beta subunit family. As to quaternary structure, heterotetramer of two alpha and two beta subunits. It depends on Mg(2+) as a cofactor.

The enzyme catalyses succinate + ATP + CoA = succinyl-CoA + ADP + phosphate. The catalysed reaction is GTP + succinate + CoA = succinyl-CoA + GDP + phosphate. Its pathway is carbohydrate metabolism; tricarboxylic acid cycle; succinate from succinyl-CoA (ligase route): step 1/1. In terms of biological role, succinyl-CoA synthetase functions in the citric acid cycle (TCA), coupling the hydrolysis of succinyl-CoA to the synthesis of either ATP or GTP and thus represents the only step of substrate-level phosphorylation in the TCA. The beta subunit provides nucleotide specificity of the enzyme and binds the substrate succinate, while the binding sites for coenzyme A and phosphate are found in the alpha subunit. The chain is Succinate--CoA ligase [ADP-forming] subunit beta from Shewanella sediminis (strain HAW-EB3).